Consider the following 345-residue polypeptide: Ryncolin-4 (345 aa).

The signal sequence occupies residues 1-19 (MKPWAAFHLIFLVASSLEG). The tract at residues 48–118 (ILQSQPGIPG…DKGDKGEDCN (71 aa)) is disordered. Positions 57-114 (GIPGVPGTNGSEGLKGDPGPQGPPGIRGPDGIRGEAGPKGDKGDQGDKGDKGDKGDKG) constitute a Collagen-like domain. Residues 86 to 116 (DGIRGEAGPKGDKGDQGDKGDKGDKGDKGED) are compositionally biased toward basic and acidic residues. The Fibrinogen C-terminal domain maps to 121–339 (DCLPTEVRNC…YADMKIRPQK (219 aa)). Cystine bridges form between C130-C158 and C282-C295.

It belongs to the ficolin lectin family. Veficolin subfamily. Post-translationally, hydroxylated, possibly at Pro-80. As to expression, expressed by the venom duct.

Its subcellular location is the secreted. Functionally, initiates complement activation and/or interferes in platelet aggregation and/or blood coagulation. This Cerberus rynchops (Dog-faced water snake) protein is Ryncolin-4.